The sequence spans 121 residues: Splicing factor 3B subunit 6 (121 aa).

Residues 12–25 (EVNRLLYVRNLPYK) form an interaction with pre-mRNA branch site region. In terms of domain architecture, RRM spans 15–90 (RLLYVRNLPY…RYLVVLYYQS (76 aa)).

This sequence belongs to the SF3B6 family. As to quaternary structure, component of splicing factor SF3B complex. Component of the U11/U12 snRNPs that are part of the U12-type spliceosome.

The protein resides in the nucleus. Functionally, involved in pre-mRNA splicing as a component of the splicing factor SF3B complex. SF3B complex is required for 'A' complex assembly formed by the stable binding of U2 snRNP to the branchpoint sequence (BPS) in pre-mRNA. Directly contacts the pre-mRNA branch site adenosine for the first catalytic step of splicing. Enters the spliceosome and associates with the pre-mRNA branch site as part of the 17S U2 or, in the case of the minor spliceosome, as part of the 18S U11/U12 snRNP complex, and thus may facilitate the interaction of these snRNP with the branch sites of U2 and U12 respectively. The protein is Splicing factor 3B subunit 6 of Drosophila melanogaster (Fruit fly).